Here is a 320-residue protein sequence, read N- to C-terminus: Carbonic anhydrase 6 (320 aa).

A signal peptide spans 1-17 (MRALALLLALPLLGARA). In terms of domain architecture, Alpha-carbonic anhydrase spans 21–278 (SLWTYSEGAL…LNGRVVESNF (258 aa)). Cysteine 42 and cysteine 224 are disulfide-bonded. The Proton donor/acceptor role is filled by histidine 85. Residues histidine 111, histidine 113, and histidine 138 each coordinate Zn(2+). A substrate-binding site is contributed by 220-221 (TT). N-linked (GlcNAc...) asparagine glycosylation occurs at asparagine 256.

This sequence belongs to the alpha-carbonic anhydrase family. The cofactor is Zn(2+).

Its subcellular location is the secreted. It catalyses the reaction hydrogencarbonate + H(+) = CO2 + H2O. Reversible hydration of carbon dioxide. Its role in saliva is unknown. This Canis lupus familiaris (Dog) protein is Carbonic anhydrase 6 (CA6).